The chain runs to 187 residues: UPF0301 protein BCI_0481 (187 aa).

This sequence belongs to the UPF0301 (AlgH) family.

In Baumannia cicadellinicola subsp. Homalodisca coagulata, this protein is UPF0301 protein BCI_0481.